The primary structure comprises 189 residues: Interferon alpha-6 (189 aa).

Residues 1–23 (MARLCAFLMVLAVLSYWPTCSLG) form the signal peptide. Disulfide bonds link C24–C122 and C52–C162. N101 is a glycosylation site (N-linked (GlcNAc...) asparagine).

The protein belongs to the alpha/beta interferon family.

It localises to the secreted. In terms of biological role, produced by macrophages, IFN-alpha have antiviral activities. Interferon stimulates the production of two enzymes: a protein kinase and an oligoadenylate synthetase. The sequence is that of Interferon alpha-6 (Ifna6) from Mus musculus (Mouse).